The sequence spans 94 residues: Co-chaperonin GroES (94 aa).

It belongs to the GroES chaperonin family. As to quaternary structure, heptamer of 7 subunits arranged in a ring. Interacts with the chaperonin GroEL.

Its subcellular location is the cytoplasm. Together with the chaperonin GroEL, plays an essential role in assisting protein folding. The GroEL-GroES system forms a nano-cage that allows encapsulation of the non-native substrate proteins and provides a physical environment optimized to promote and accelerate protein folding. GroES binds to the apical surface of the GroEL ring, thereby capping the opening of the GroEL channel. The chain is Co-chaperonin GroES from Clostridium novyi (strain NT).